We begin with the raw amino-acid sequence, 546 residues long: CTP synthase (546 aa).

Residues 1–269 (MADTKYIFVT…DKVTLKKLAL (269 aa)) are amidoligase domain. Ser15 is a binding site for CTP. Ser15 is a UTP binding site. 16–21 (SLGKGI) is a binding site for ATP. Tyr56 serves as a coordination point for L-glutamine. Residue Asp73 participates in ATP binding. Asp73 and Glu143 together coordinate Mg(2+). CTP is bound by residues 150 to 152 (DIE), 190 to 195 (KTKPTQ), and Lys226. UTP contacts are provided by residues 190–195 (KTKPTQ) and Lys226. The 243-residue stretch at 295 to 537 (HIGLIGKYVE…VKAAHEHSVK (243 aa)) folds into the Glutamine amidotransferase type-1 domain. Gly357 provides a ligand contact to L-glutamine. Cys384 serves as the catalytic Nucleophile; for glutamine hydrolysis. L-glutamine contacts are provided by residues 385–388 (LGMQ), Glu408, and Arg465. Residues His510 and Glu512 contribute to the active site.

This sequence belongs to the CTP synthase family. As to quaternary structure, homotetramer.

It carries out the reaction UTP + L-glutamine + ATP + H2O = CTP + L-glutamate + ADP + phosphate + 2 H(+). It catalyses the reaction L-glutamine + H2O = L-glutamate + NH4(+). The catalysed reaction is UTP + NH4(+) + ATP = CTP + ADP + phosphate + 2 H(+). It participates in pyrimidine metabolism; CTP biosynthesis via de novo pathway; CTP from UDP: step 2/2. With respect to regulation, allosterically activated by GTP, when glutamine is the substrate; GTP has no effect on the reaction when ammonia is the substrate. The allosteric effector GTP functions by stabilizing the protein conformation that binds the tetrahedral intermediate(s) formed during glutamine hydrolysis. Inhibited by the product CTP, via allosteric rather than competitive inhibition. Functionally, catalyzes the ATP-dependent amination of UTP to CTP with either L-glutamine or ammonia as the source of nitrogen. Regulates intracellular CTP levels through interactions with the four ribonucleotide triphosphates. This chain is CTP synthase, found in Christiangramia forsetii (strain DSM 17595 / CGMCC 1.15422 / KT0803) (Gramella forsetii).